A 137-amino-acid polypeptide reads, in one-letter code: Large ribosomal subunit protein uL16 (137 aa).

Belongs to the universal ribosomal protein uL16 family. Part of the 50S ribosomal subunit.

In terms of biological role, binds 23S rRNA and is also seen to make contacts with the A and possibly P site tRNAs. The protein is Large ribosomal subunit protein uL16 of Bartonella bacilliformis (strain ATCC 35685 / KC583 / Herrer 020/F12,63).